Consider the following 257-residue polypeptide: Flavodoxin/ferredoxin--NADP reductase (257 aa).

Residues 2 to 110 (NPWINANVLK…EKSFGFFTLD (109 aa)) enclose the FAD-binding FR-type domain. FAD is bound by residues 59–62 (RAYS), Tyr75, 83–85 (KLS), and Thr125. NADP(+)-binding positions include 152 to 153 (VR), 182 to 183 (SR), Arg193, 223 to 225 (NPA), and Asp229. Position 256 to 257 (256 to 257 (YW)) interacts with FAD.

Belongs to the ferredoxin--NADP reductase type 1 family. FAD serves as cofactor.

It is found in the cytoplasm. The catalysed reaction is 2 reduced [2Fe-2S]-[ferredoxin] + NADP(+) + H(+) = 2 oxidized [2Fe-2S]-[ferredoxin] + NADPH. It catalyses the reaction reduced [flavodoxin] + NADP(+) = oxidized [flavodoxin] + NADPH + 2 H(+). In terms of biological role, transports electrons between flavodoxin or ferredoxin and NADPH. The polypeptide is Flavodoxin/ferredoxin--NADP reductase (fpr) (Buchnera aphidicola subsp. Schizaphis graminum (strain Sg)).